The sequence spans 228 residues: Heat shock 70-related protein 4 (228 aa).

Residues 57-80 are disordered; it reads RWHEPPGNTVFDEAHDRPQVRRPD. A compositionally biased stretch (basic and acidic residues) spans 68–80; it reads DEAHDRPQVRRPD.

The protein belongs to the heat shock protein 70 family.

The polypeptide is Heat shock 70-related protein 4 (HSP70.4) (Leishmania major).